The primary structure comprises 130 residues: Small ribosomal subunit protein uS11 (130 aa).

It belongs to the universal ribosomal protein uS11 family. Part of the 30S ribosomal subunit. Interacts with proteins S7 and S18. Binds to IF-3.

In terms of biological role, located on the platform of the 30S subunit, it bridges several disparate RNA helices of the 16S rRNA. Forms part of the Shine-Dalgarno cleft in the 70S ribosome. The chain is Small ribosomal subunit protein uS11 from Campylobacter fetus subsp. fetus (strain 82-40).